A 149-amino-acid polypeptide reads, in one-letter code: Ribonuclease pancreatic (149 aa).

The first 25 residues, 1–25 (MGLEKSLILLPLLVLVLAWVQPSLG), serve as a signal peptide directing secretion. Substrate is bound by residues lysine 32 and arginine 35. Residue histidine 37 is the Proton acceptor of the active site. Disulfide bonds link cysteine 51-cysteine 109, cysteine 65-cysteine 120, cysteine 83-cysteine 135, and cysteine 90-cysteine 97. Residue 66-70 (KRVNT) coordinates substrate. Asparagine 87 carries an N-linked (GlcNAc...) asparagine glycan. Lysine 91 and arginine 110 together coordinate substrate. Histidine 144 acts as the Proton donor in catalysis.

This sequence belongs to the pancreatic ribonuclease family. As to quaternary structure, monomer. Interacts with and forms tight 1:1 complexes with RNH1. Dimerization of two such complexes may occur. Interaction with RNH1 inhibits this protein. Pancreas.

It is found in the secreted. It catalyses the reaction an [RNA] containing cytidine + H2O = an [RNA]-3'-cytidine-3'-phosphate + a 5'-hydroxy-ribonucleotide-3'-[RNA].. It carries out the reaction an [RNA] containing uridine + H2O = an [RNA]-3'-uridine-3'-phosphate + a 5'-hydroxy-ribonucleotide-3'-[RNA].. Endonuclease that catalyzes the cleavage of RNA on the 3' side of pyrimidine nucleotides. Acts on single-stranded and double-stranded RNA. In Acomys cahirinus (Cairo spiny mouse), this protein is Ribonuclease pancreatic (RNASE1).